Consider the following 201-residue polypeptide: MSGTSESELKHLLSSLHLTYGFLGTFDCRFPGFLQKNKVQTAIVNTGPREKGGVHWVAMAWDPIYYKMYIFDPLGWKESQLQSLYNYSYQSMLKRSALTESERCITVEKNTQSVQCTCSGACGLFCVFFLYCFYKYRGKAFNNELFQSLNGASPSLTPSDPSSLHKNQDILYDFFICKSSYFRHNKKMLISNTKLGLIKSH.

Residues H55, D72, and C122 contribute to the active site.

It belongs to the peptidase C5 family. As to quaternary structure, interacts with protease cofactor pVI-C; this interaction is necessary for protease activation.

The protein resides in the virion. Its subcellular location is the host nucleus. It catalyses the reaction Cleaves proteins of the adenovirus and its host cell at two consensus sites: -Yaa-Xaa-Gly-Gly-|-Xaa- and -Yaa-Xaa-Gly-Xaa-|-Gly- (in which Yaa is Met, Ile or Leu, and Xaa is any amino acid).. Its activity is regulated as follows. Requires DNA and protease cofactor for maximal activation. Inside nascent virions, becomes partially activated by binding to the viral DNA, allowing it to cleave the cofactor that binds to the protease and fully activates it. Actin, like the viral protease cofactor, seems to act as a cofactor in the cleavage of cytokeratin 18 and of actin itself. Its function is as follows. Cleaves viral precursor proteins (pTP, pIIIa, pVI, pVII, pVIII, and pX) inside newly assembled particles giving rise to mature virions. Protease complexed to its cofactor slides along the viral DNA to specifically locate and cleave the viral precursors. Mature virions have a weakened organization compared to the unmature virions, thereby facilitating subsequent uncoating. Without maturation, the particle lacks infectivity and is unable to uncoat. Late in adenovirus infection, in the cytoplasm, may participate in the cytoskeleton destruction. Cleaves host cell cytoskeletal keratins K7 and K18. The protein is Protease of Bovine adenovirus 4 (BAdV-4).